Consider the following 276-residue polypeptide: Alpha N-terminal protein methyltransferase 1 (276 aa).

The tract at residues methionine 1 to alanine 57 is disordered. Over residues serine 34–alanine 57 the composition is skewed to low complexity. Residues glycine 114, arginine 119, glutamate 136–aspartate 138, leucine 167–glutamine 168, and glutamine 182 contribute to the S-adenosyl-L-methionine site.

This sequence belongs to the methyltransferase superfamily. NTM1 family.

The enzyme catalyses N-terminal L-alanyl-L-prolyl-L-lysyl-[protein] + 3 S-adenosyl-L-methionine = N-terminal N,N,N-trimethyl-L-alanyl-L-prolyl-L-lysyl-[protein] + 3 S-adenosyl-L-homocysteine + 3 H(+). It carries out the reaction N-terminal L-seryl-L-prolyl-L-lysyl-[protein] + 3 S-adenosyl-L-methionine = N-terminal N,N,N-trimethyl-L-seryl-L-prolyl-L-lysyl-[protein] + 3 S-adenosyl-L-homocysteine + 3 H(+). The catalysed reaction is N-terminal L-prolyl-L-prolyl-L-lysyl-[protein] + 2 S-adenosyl-L-methionine = N-terminal N,N-dimethyl-L-prolyl-L-prolyl-L-lysyl-[protein] + 2 S-adenosyl-L-homocysteine + 2 H(+). In terms of biological role, alpha-N-methyltransferase that methylates the N-terminus of target proteins containing the N-terminal motif [Ala/Pro/Ser]-Pro-Lys when the initiator Met is cleaved. Specifically catalyzes mono-, di- or tri-methylation of exposed alpha-amino group of Ala or Ser residue in the [Ala/Ser]-Pro-Lys motif and mono- or di-methylation of Pro in the Pro-Pro-Lys motif. The sequence is that of Alpha N-terminal protein methyltransferase 1 (Ntmt) from Drosophila melanogaster (Fruit fly).